Here is a 798-residue protein sequence, read N- to C-terminus: Integrin beta-1 (798 aa).

Positions 1–20 (MNLQLIFWIGLISSICCVFG) are cleaved as a signal peptide. The Extracellular segment spans residues 21-728 (QADENRCLKA…ETPECPTGPD (708 aa)). The PSI domain occupies 26–76 (RCLKANAKSCGECIQAGPNCGWCVNSTFLQEGMPTSARCDDLEALKKKGCH). Disulfide bonds link Cys27/Cys45, Cys35/Cys464, Cys38/Cys64, Cys48/Cys75, Cys207/Cys213, Cys261/Cys301, Cys401/Cys415, Cys435/Cys462, Cys466/Cys486, Cys477/Cys489, Cys491/Cys500, Cys502/Cys533, Cys516/Cys531, Cys525/Cys536, Cys538/Cys553, Cys555/Cys576, Cys560/Cys574, Cys568/Cys579, Cys581/Cys590, Cys592/Cys615, Cys599/Cys613, Cys607/Cys618, Cys620/Cys630, Cys633/Cys636, Cys640/Cys691, Cys646/Cys665, Cys649/Cys661, and Cys699/Cys723. Asn50 carries N-linked (GlcNAc...) asparagine glycosylation. Residues 75-91 (CHPDDIENPRGSKDVKK) show a composition bias toward basic and acidic residues. The segment at 75–107 (CHPDDIENPRGSKDVKKNKNVTNRSKGTAEKLQ) is disordered. N-linked (GlcNAc...) asparagine glycans are attached at residues Asn94 and Asn97. In terms of domain architecture, VWFA spans 140–378 (DYPIDLYYLM…QLIIDAYNSL (239 aa)). Mg(2+) is bound by residues Ser152 and Ser154. Residues Ser154, Asp157, Asp158, and Glu189 each contribute to the Ca(2+) site. The CX3CL1-binding stretch occupies residues 207–213 (CTSEQNC). An N-linked (GlcNAc...) asparagine glycan is attached at Asn212. Positions 244, 246, 248, and 249 each coordinate Ca(2+). Glu249 serves as a coordination point for Mg(2+). The N-linked (GlcNAc...) asparagine glycan is linked to Asn269. Residues 295–314 (LPNDGQCHLENDVYTMSHYY) are CX3CL1-binding. Ca(2+) is bound at residue Ala362. 3 N-linked (GlcNAc...) asparagine glycosylation sites follow: Asn363, Asn406, and Asn417. The segment at 383-465 (ILENSKLPEG…IILQFICECE (83 aa)) is interaction with TMEM182. I-EGF domains lie at 466-501 (CQNE…RHCE), 502-554 (CSTD…KFCE), 555-591 (CDNF…SACD), and 592-631 (CSLD…PTCE). Asn481 carries an N-linked (GlcNAc...) asparagine glycan. Asn520 is a glycosylation site (N-linked (GlcNAc...) asparagine). An N-linked (GlcNAc...) asparagine glycan is attached at Asn584. Asn669 carries N-linked (GlcNAc...) asparagine glycosylation. A helical transmembrane segment spans residues 729–751 (IIPIVAGVVAGIVLIGLALLLIW). Topologically, residues 752 to 798 (KLLMIIHDTREFAKFEKEKMNAKWDTGENPIYKSAVTTVVNPKYEGK) are cytoplasmic. Residues 762-767 (EFAKFE) are signal for sorting from recycling endosomes; interaction with ACAP1. Thr777 is subject to Phosphothreonine. Residue Tyr783 is modified to Phosphotyrosine. Ser785 carries the post-translational modification Phosphoserine. The interaction with ITGB1BP1 stretch occupies residues 785 to 792 (SAVTTVVN). A Phosphothreonine modification is found at Thr789. Lys794 bears the N6-acetyllysine; alternate mark. A Glycyl lysine isopeptide (Lys-Gly) (interchain with G-Cter in SUMO1); alternate cross-link involves residue Lys794.

The protein belongs to the integrin beta chain family. As to quaternary structure, interacts with seprase FAP (seprase); the interaction occurs at the cell surface of invadopodia membrane in a collagen-dependent manner. Heterodimer of an alpha and a beta subunit. Beta-1 associates with either alpha-1, alpha-2, alpha-3, alpha-4, alpha-5, alpha-6, alpha-7, alpha-8, alpha-9, alpha-10, alpha-11 or alpha-V. ITGA6:ITGB1 is found in a complex with CD9; interaction takes place in oocytes and is involved in sperm-egg fusion. Binds LGALS3BP and NMRK2, when associated with alpha-7, but not with alpha-5. Interacts with FLNA, FLNB, FLNC and RANBP9. Interacts with KRT1 in the presence of RACK1 and SRC. Interacts with JAML; integrin alpha-4/beta-1 may regulate leukocyte to endothelial cells adhesion by controlling JAML homodimerization. Interacts with RAB21. Interacts (via the cytoplasmic region) with RAB25 (via the hypervariable C-terminal region). Interacts with MYO10. Interacts with ITGB1BP1 (via C-terminal region); the interaction is a prerequisite for focal adhesion disassembly. Interacts with TLN1; the interaction is prevented by competitive binding of ITGB1BP1. Interacts with ACAP1; required for ITGB1 recycling. Interacts with ASAP3. Interacts with FERMT2; the interaction is inhibited in presence of ITGB1BP1. Interacts with DAB2. Interacts with FGR and HCK. Interacts with alpha-7A and alpha-7B in adult skeletal muscle. Interacts with alpha-7B in cardiomyocytes of adult heart. Interacts with EMP2; the interaction may be direct or indirect and ITGB1 has a heterodimer form. ITGA5:ITGB1 interacts with CCN3. ITGA4:ITGB1 is found in a ternary complex with CX3CR1 and CX3CL1. ITGA5:ITGB1 interacts with FBN1. ITGA5:ITGB1 acts as a receptor for fibronectin FN1 and mediates R-G-D-dependent cell adhesion to FN1. ITGA5:ITGB1 interacts with IL1B. Interacts with MDK. ITGA4:ITGB1 interacts with MDK; this interaction mediates MDK-induced osteoblast cells migration through PXN phosphorylation. ITGA6:ITGB1 interacts with MDK; this interaction mediates MDK-induced neurite-outgrowth. ITGA5:ITGB1 interacts with ACE2. Interacts with TMEM182 and LAMB1. Interacts with tensin TNS3; TNS3 also interacts with PEAK1, thus acting as an adapter molecule to bridge the association of PEAK1 with ITGB1. Interacts with tensin TNS4; the interaction displaces tensin TNS3 from the ITGB1 cytoplasmic tail and promotes ITGB1 stability. Integrin ITGA9:ITGB1 interacts with SPP1/OPN (via N-terminus). Integrin ITGA9:ITGB1 interacts with TNC/TNFN3 (via the 3rd Fibronectin type-III domain). Integrins ITGA4:ITGB1 and ITGA9:ITGB1 interact with SVEP1 (via Sushi domain 21); thereby inhibit Ca(2+) intracellular signaling and as a result repress vasocontraction. ITGA4:ITGB1 and ITGA5:ITGB1 interacts with SELP. Interacts with CD248. ITGA5:ITGB1 interacts with IGFBP1. ITGA4:ITGB1 interacts with BCAM. Interacts with ADGRG6.

The protein localises to the cell membrane. It localises to the cell projection. It is found in the invadopodium membrane. Its subcellular location is the ruffle membrane. The protein resides in the recycling endosome. The protein localises to the melanosome. It localises to the lamellipodium. It is found in the ruffle. Its subcellular location is the cell junction. The protein resides in the focal adhesion. In terms of biological role, integrins alpha-1/beta-1, alpha-2/beta-1, alpha-10/beta-1 and alpha-11/beta-1 are receptors for collagen. Integrins alpha-1/beta-1 and alpha-2/beta-2 recognize the proline-hydroxylated sequence G-F-P-G-E-R in collagen. Integrins alpha-2/beta-1, alpha-3/beta-1, alpha-4/beta-1, alpha-5/beta-1, alpha-8/beta-1, alpha-10/beta-1, alpha-11/beta-1 and alpha-V/beta-1 are receptors for fibronectin. Alpha-4/beta-1 recognizes one or more domains within the alternatively spliced CS-1 and CS-5 regions of fibronectin. Integrin alpha-5/beta-1 is a receptor for fibrinogen. Integrin alpha-1/beta-1, alpha-2/beta-1, alpha-6/beta-1 and alpha-7/beta-1 are receptors for lamimin. Integrin alpha-6/beta-1 (ITGA6:ITGB1) is present in oocytes and is involved in sperm-egg fusion. Integrin alpha-4/beta-1 is a receptor for VCAM1 and recognizes the sequence Q-I-D-S in VCAM1. Integrin alpha-9/beta-1 is a receptor for VCAM1, cytotactin and osteopontin. It recognizes the sequence A-E-I-D-G-I-E-L in cytotactin. Integrin alpha-3/beta-1 is a receptor for epiligrin, thrombospondin and CSPG4. Integrin alpha-3/beta-1 provides a docking site for FAP (seprase) at invadopodia plasma membranes in a collagen-dependent manner and hence may participate in the adhesion, formation of invadopodia and matrix degradation processes, promoting cell invasion. Alpha-3/beta-1 may mediate with LGALS3 the stimulation by CSPG4 of endothelial cells migration. Integrin alpha-V/beta-1 is a receptor for vitronectin. Beta-1 integrins recognize the sequence R-G-D in a wide array of ligands. When associated with alpha-7/beta-1 integrin, regulates cell adhesion and laminin matrix deposition. Involved in promoting endothelial cell motility and angiogenesis. Involved in osteoblast compaction through the fibronectin fibrillogenesis cell-mediated matrix assembly process and the formation of mineralized bone nodules. May be involved in up-regulation of the activity of kinases such as PKC via binding to KRT1. Together with KRT1 and RACK1, serves as a platform for SRC activation or inactivation. Plays a mechanistic adhesive role during telophase, required for the successful completion of cytokinesis. ITGA4:ITGB1 binds to fractalkine (CX3CL1) and may act as its coreceptor in CX3CR1-dependent fractalkine signaling. ITGA4:ITGB1 and ITGA5:ITGB1 bind to PLA2G2A via a site (site 2) which is distinct from the classical ligand-binding site (site 1) and this induces integrin conformational changes and enhanced ligand binding to site 1. ITGA5:ITGB1 acts as a receptor for fibrillin-1 (FBN1) and mediates R-G-D-dependent cell adhesion to FBN1. ITGA5:ITGB1 is a receptor for IL1B and binding is essential for IL1B signaling. ITGA5:ITGB3 is a receptor for soluble CD40LG and is required for CD40/CD40LG signaling. Plays an important role in myoblast differentiation and fusion during skeletal myogenesis. ITGA9:ITGB1 may play a crucial role in SVEP1/polydom-mediated myoblast cell adhesion. Integrins ITGA9:ITGB1 and ITGA4:ITGB1 repress PRKCA-mediated L-type voltage-gated channel Ca(2+) influx and ROCK-mediated calcium sensitivity in vascular smooth muscle cells via their interaction with SVEP1, thereby inhibit vasocontraction. The sequence is that of Integrin beta-1 (ITGB1) from Felis catus (Cat).